The primary structure comprises 370 residues: Ig heavy chain C region (370 aa).

Ig-like domains are found at residues 40-134 (PTVI…RNIT), 145-237 (PAIK…DSIH), and 247-347 (PSVS…RTVN). N-linked (GlcNAc...) asparagine glycans are attached at residues Asn98, Asn132, Asn177, Asn343, Asn347, and Asn357.

In Heterodontus francisci (Horn shark), this protein is Ig heavy chain C region.